Reading from the N-terminus, the 148-residue chain is Large ribosomal subunit protein bL9 (148 aa).

Belongs to the bacterial ribosomal protein bL9 family.

Its function is as follows. Binds to the 23S rRNA. This Aeromonas salmonicida (strain A449) protein is Large ribosomal subunit protein bL9.